The chain runs to 136 residues: Heme-binding protein Rv0203 (136 aa).

The signal sequence occupies residues Met-1–Ala-27. Cys-41 and Cys-115 are disulfide-bonded. Tyr-60, His-64, and His-90 together coordinate heme.

Dimer of dimers.

The protein localises to the secreted. Functionally, part of a heme-iron acquisition system. Acts by binding heme and delivering it to the membrane proteins MmpL3 and MmpL11. Can use free heme or heme from host hemoglobin. The chain is Heme-binding protein Rv0203 from Mycobacterium tuberculosis (strain ATCC 25618 / H37Rv).